The primary structure comprises 103 residues: Small ribosomal subunit protein uS10 (103 aa).

This sequence belongs to the universal ribosomal protein uS10 family. Part of the 30S ribosomal subunit.

In terms of biological role, involved in the binding of tRNA to the ribosomes. In Shewanella denitrificans (strain OS217 / ATCC BAA-1090 / DSM 15013), this protein is Small ribosomal subunit protein uS10.